Reading from the N-terminus, the 587-residue chain is Protein FRIGIDA-ESSENTIAL 1 (587 aa).

A C3H1-type zinc finger spans residues 96–123; that stretch reads KRAALPCKFFAKGWCFNGVSCKFLHVKE. Disordered regions lie at residues 264–346, 368–421, and 467–492; these read DMGS…SFTI, GDRP…HQET, and IKPAGHDSWHRSDGSSYKKTKKSDEI. Residues 294–304 show a composition bias toward low complexity; that stretch reads NGNSLSGSGSL. The segment covering 470–479 has biased composition (basic and acidic residues); it reads AGHDSWHRSD.

As to quaternary structure, component of the transcription activator complex FRI-C composed of FRI, FRL1, SUF4, FLX and FES1. Interacts with FLX, (via C-terminus) with FRI (via C-terminus), and with RIN1, a component of the SWR1 chromatin-remodeling complex. Expressed in root and shoot apices and vasculature.

The protein localises to the nucleus. Transcriptional activator involved in the FRIGIDA-mediated vernalization pathway, but not in the autonomous flowering pathway. Acts cooperatively with FRI (FRIGIDA) or FRL1 (FRIGIDA-LIKE 1) to promote FLC (FLOWERING LOCUS C) expression. Required for the stabilization of the FRI-C complex. This is Protein FRIGIDA-ESSENTIAL 1 (FES1) from Arabidopsis thaliana (Mouse-ear cress).